The following is a 221-amino-acid chain: MGTVVAKLLLPTLSSLAFLPTVSIATKRRFYMEAMVYLFTMFFVAFSHACDGPGLSVLCFMRRDILEYFSIYGTALSMWVSLMALADFDEPQRSTFTMLGVLTIAVRTFHDRWGYGVYSGPIGTATLIIAVKWLKKMKEKKGLYPDKSIYTQQIGPGLCFGALALMLRFFFEEWDYTYVHSFYHCALAMSFVLLLPKVNKKAGNAGAPAKLTFSTLCCTCV.

The Extracellular portion of the chain corresponds to 1 to 3 (MGT). Residues 4 to 24 (VVAKLLLPTLSSLAFLPTVSI) traverse the membrane as a helical segment. Over 25 to 29 (ATKRR) the chain is Cytoplasmic. The helical transmembrane segment at 30 to 50 (FYMEAMVYLFTMFFVAFSHAC) threads the bilayer. The Extracellular portion of the chain corresponds to 51–64 (DGPGLSVLCFMRRD). A helical membrane pass occupies residues 65–85 (ILEYFSIYGTALSMWVSLMAL). Over 86–93 (ADFDEPQR) the chain is Cytoplasmic. A helical transmembrane segment spans residues 94–110 (STFTMLGVLTIAVRTFH). Topologically, residues 111 to 113 (DRW) are extracellular. Residues 114–134 (GYGVYSGPIGTATLIIAVKWL) traverse the membrane as a helical segment. Topologically, residues 135–153 (KKMKEKKGLYPDKSIYTQQ) are cytoplasmic. Residues 154-174 (IGPGLCFGALALMLRFFFEEW) traverse the membrane as a helical segment. Asp-175 is a topological domain (extracellular). The chain crosses the membrane as a helical span at residues 176–196 (YTYVHSFYHCALAMSFVLLLP). Over 197–221 (KVNKKAGNAGAPAKLTFSTLCCTCV) the chain is Cytoplasmic. 2 S-palmitoyl cysteine lipidation sites follow: Cys-217 and Cys-218.

It belongs to the TMEM8 family. Interacts with MYMX. In terms of processing, palmitoylated at the C-terminus; palmitoylation promotes localization to the Golgi apparatus. In terms of tissue distribution, specifically expressed in skeletal muscle during embryogenesis and adult muscle regeneration.

The protein resides in the cell membrane. Its subcellular location is the golgi apparatus membrane. In terms of biological role, myoblast-specific protein that mediates myoblast fusion, an essential step for the formation of multi-nucleated muscle fibers. Actively participates in the membrane fusion reaction by mediating the mixing of cell membrane lipids (hemifusion) upstream of MYMX. Acts independently of MYMX. Involved in skeletal muscle regeneration in response to injury by mediating the fusion of satellite cells, a population of muscle stem cells, with injured myofibers. Also involved in skeletal muscle hypertrophy, probably by mediating the fusion of satellite cells with myofibers. The sequence is that of Protein myomaker from Mus musculus (Mouse).